The chain runs to 362 residues: MLFPSIVAALAALANPVLSLTIPQATGSELDVQLSAIGNTRIKAVITNKADRQLKLLKYNNFFDDGPIQKAGVFKDGQPVKFEGMLRRVLMKNLEPSLFVSLSPGQTVEREFDIASTADLASGGAYSVFSQGAIPFAEGDGTTIAGAVAFKSNKLDLDIDGALAATVSKAINPISARTRVESACRGEQRETLLKALEYSAQLSRAAAQAAQNNTRKVEEYFMKSDAQTVETIVARLNAVAQESSSTDSGATRYFCNDRGNQCTPNTIAYTLPSLNVVVNCPIYYDLPVISDECHAQDQATTCLHEFTHNPGVYDPYCRDHAYGYDGIRKLSPEQALLNADTYSLFANGKPKSQTTSNFNLKF.

Residues 1–19 (MLFPSIVAALAALANPVLS) form the signal peptide. Positions 20–177 (LTIPQATGSE…SKAINPISAR (158 aa)) are excised as a propeptide. Disulfide bonds link Cys-184-Cys-255 and Cys-262-Cys-280. His-304 serves as a coordination point for Zn(2+). Residue Glu-305 is part of the active site. Positions 308 and 319 each coordinate Zn(2+).

The protein belongs to the peptidase M35 family. Zn(2+) serves as cofactor.

The protein resides in the secreted. The enzyme catalyses Preferential cleavage of bonds with hydrophobic residues in P1'. Also 3-Asn-|-Gln-4 and 8-Gly-|-Ser-9 bonds in insulin B chain.. Functionally, secreted metalloproteinase that allows assimilation of proteinaceous substrates. Shows high activities on basic nuclear substrates such as histone and protamine. May be involved in virulence. The protein is Neutral protease 2 homolog MEP2 (MEP2) of Coccidioides posadasii (strain C735) (Valley fever fungus).